Here is a 3707-residue protein sequence, read N- to C-terminus: Basement membrane-specific heparan sulfate proteoglycan core protein (3707 aa).

The N-terminal stretch at 1-21 (MGQRAVGSLLLGLLLHARLLA) is a signal peptide. O-linked (Xyl...) (heparan sulfate) serine glycosylation is found at serine 65, serine 71, and serine 76. Residues 80 to 191 (QMVYFRALVN…WGFKFRRLGT (112 aa)) form the SEA domain. The N-linked (GlcNAc...) asparagine glycan is linked to asparagine 89. LDL-receptor class A domains lie at 195-234 (FPRVCTETEFACHSYNECVALEYRCDRRPDCRDMSDELNC), 281-319 (GPSACGPQEASCHSGHCIPRDYLCDGQEDCRDGSDELGC), 320-359 (ASPPPCEPNEFACENGHCALKLWRCDGDFDCEDRTDEANC), and 360-403 (SVKQ…EFGC). 13 disulfides stabilise this stretch: cysteine 199–cysteine 212, cysteine 206–cysteine 225, cysteine 219–cysteine 234, cysteine 285–cysteine 297, cysteine 292–cysteine 310, cysteine 304–cysteine 319, cysteine 325–cysteine 337, cysteine 332–cysteine 350, cysteine 344–cysteine 359, cysteine 368–cysteine 381, cysteine 375–cysteine 394, cysteine 388–cysteine 403, and cysteine 428–cysteine 479. A glycan (N-linked (GlcNAc...) asparagine) is linked at asparagine 358. Residues 404-504 (MPPQVVTPPQ…VLELVPQRGP (101 aa)) form the Ig-like C2-type 1 domain. The Laminin EGF-like 1; first part domain maps to 521–530 (CFCFGVTNVC). Residues 538 to 730 (DQIRLSFDQP…IHGRAHSVEE (193 aa)) form the Laminin IV type A 1 domain. The N-linked (GlcNAc...) asparagine glycan is linked to asparagine 554. The region spanning 731–763 (CRCPIGYSGLSCESCDAHFTRVPGGPYLGTCSG) is the Laminin EGF-like 1; second part domain. 11 disulfides stabilise this stretch: cysteine 764–cysteine 773, cysteine 766–cysteine 780, cysteine 783–cysteine 792, cysteine 795–cysteine 811, cysteine 814–cysteine 829, cysteine 816–cysteine 839, cysteine 842–cysteine 851, cysteine 854–cysteine 869, cysteine 879–cysteine 892, cysteine 894–cysteine 903, and cysteine 906–cysteine 921. 2 Laminin EGF-like domains span residues 764–813 (CNCN…ACRP) and 814–871 (CPCP…KCRP). The region spanning 879–923 (CDERGSLGTSGETCRCKNNVVGRLCNECSDGSFHLSKQNPDGCLK) is the Laminin EGF-like 4; truncated domain. In terms of domain architecture, Laminin EGF-like 5; first part spans 924-933 (CFCMGVSRQC). One can recognise a Laminin IV type A 2 domain in the interval 941–1125 (AQVLGASEQP…GQDSAREVEQ (185 aa)). A Laminin EGF-like 5; second part domain is found at 1126–1158 (CTCPPGYRGPSCQDCDTGYTRVPSGLYLGTCER). Intrachain disulfides connect cysteine 1159/cysteine 1168, cysteine 1161/cysteine 1175, cysteine 1178/cysteine 1187, cysteine 1190/cysteine 1206, cysteine 1209/cysteine 1224, cysteine 1211/cysteine 1234, cysteine 1237/cysteine 1246, cysteine 1249/cysteine 1263, cysteine 1275/cysteine 1287, cysteine 1277/cysteine 1293, cysteine 1295/cysteine 1304, and cysteine 1307/cysteine 1322. 3 Laminin EGF-like domains span residues 1159–1208 (CNCH…DCQP), 1209–1265 (CPCY…PCHR), and 1275–1324 (CGCD…GCLP). The 10-residue stretch at 1325 to 1334 (CFCMGVTQQC) folds into the Laminin EGF-like 9; first part domain. The Laminin IV type A 3 domain maps to 1344 to 1529 (ISTHFAPGDF…SGPRALEVEE (186 aa)). Positions 1530–1562 (CRCPPGYVGLSCQDCAPGYTRTGSGLYLGQCEL) constitute a Laminin EGF-like 9; second part domain. 8 disulfides stabilise this stretch: cysteine 1563-cysteine 1572, cysteine 1565-cysteine 1579, cysteine 1582-cysteine 1591, cysteine 1594-cysteine 1610, cysteine 1613-cysteine 1628, cysteine 1615-cysteine 1638, cysteine 1641-cysteine 1650, and cysteine 1653-cysteine 1668. Laminin EGF-like domains lie at 1563–1612 (CECN…DCQP) and 1613–1670 (CACP…RCQP). Ig-like C2-type domains lie at 1677-1771 (EVQI…KPIM), 1772-1865 (VTVE…STAP), 1866-1954 (VASI…GGSG), 1955-2049 (PRVQ…PAPA), 2050-2148 (SPAP…PGVV), 2149-2244 (PPIR…PAPG), 2245-2343 (LAQP…RLRS), 2344-2436 (PVIS…PPTV), 2437-2532 (SVLP…APGT), 2533-2619 (PQVQ…VESP), 2620-2720 (PYAT…GGST), 2721-2809 (PTVQ…ALPS), 2810-2895 (VLIN…LVQA), and 2896-2980 (LPQI…LQVP). The interval 1713 to 1733 (DGRPLPSSAQQRHQGSELHFP) is disordered. 3 cysteine pairs are disulfide-bonded: cysteine 1792–cysteine 1839, cysteine 1886–cysteine 1932, and cysteine 1976–cysteine 2021. A disordered region spans residues 2039 to 2061 (SPSTNSPPAPASPAPIRIESSSS). The span at 2052-2061 (APIRIESSSS) shows a compositional bias: low complexity. 3 cysteine pairs are disulfide-bonded: cysteine 2073–cysteine 2118, cysteine 2170–cysteine 2215, and cysteine 2268–cysteine 2313. Residues asparagine 2336, asparagine 2394, and asparagine 2427 are each glycosylated (N-linked (GlcNAc...) asparagine). Residues cysteine 2365 and cysteine 2413 are joined by a disulfide bond. Cystine bridges form between cysteine 2456-cysteine 2506 and cysteine 2554-cysteine 2599. N-linked (GlcNAc...) asparagine glycosylation occurs at asparagine 2600. Cysteine 2641 and cysteine 2686 are disulfide-bonded. 2 disulfides stabilise this stretch: cysteine 2831/cysteine 2876 and cysteine 2917/cysteine 2962. Positions 2984-3162 (IPYFTQTPYS…VNLTTHGISH (179 aa)) constitute a Laminin G-like 1 domain. Residues asparagine 3098 and asparagine 3154 are each glycosylated (N-linked (GlcNAc...) asparagine). 5 cysteine pairs are disulfide-bonded: cysteine 3137-cysteine 3163, cysteine 3166-cysteine 3177, cysteine 3171-cysteine 3187, cysteine 3204-cysteine 3216, and cysteine 3229-cysteine 3238. One can recognise an EGF-like domain in the interval 3163-3241 (CPTCQDRPCQ…GRSGVRCEEG (79 aa)). The Laminin G-like 2 domain maps to 3245–3425 (TTPSMSGAGS…VGQCYDSSPC (181 aa)). Asparagine 3385 is a glycosylation site (N-linked (GlcNAc...) asparagine). Disulfide bonds link cysteine 3393–cysteine 3419, cysteine 3425–cysteine 3436, cysteine 3430–cysteine 3446, cysteine 3448–cysteine 3457, cysteine 3464–cysteine 3476, cysteine 3470–cysteine 3481, and cysteine 3483–cysteine 3492. Serine 3510 is a glycosylation site (O-linked (Xyl...) (chondroitin sulfate) serine). In terms of domain architecture, Laminin G-like 3 spans 3518–3705 (QYGAYFYDNG…AQAGANTRPC (188 aa)). The Ca(2+) site is built by aspartate 3574 and leucine 3591. The tract at residues 3615–3617 (LRE) is mediates motor neuron attachment. Positions 3641 and 3643 each coordinate Ca(2+). The cysteines at positions 3671 and 3705 are disulfide-linked. The tract at residues 3680–3707 (ARPGAPPPQPLDLQHRAQAGANTRPCPS) is disordered.

In terms of assembly, has a strong tendency to aggregate in dimers or stellate structures. Interacts with other basement membrane components such as laminin, prolargin and collagen type IV. Interacts with COL13A1. Interacts with FGFBP1. Interacts with VWA1. Interacts (via C-terminus) with ECM1 (via C-terminus). Interacts with SVEP1. Proteolytic processing produces the C-terminal angiogenic peptide, endorepellin. This peptide can be further processed to produce the LG3 peptide. Post-translationally, O-glycosylated. Contains three heparan sulfate chains. Also contains chondroitin sulfate.

It is found in the secreted. It localises to the extracellular space. Its subcellular location is the extracellular matrix. The protein resides in the basement membrane. Integral component of basement membranes. Component of the glomerular basement membrane (GBM), responsible for the fixed negative electrostatic membrane charge, and which provides a barrier which is both size- and charge-selective. It serves as an attachment substrate for cells. Plays essential roles in vascularization. Critical for normal heart development and for regulating the vascular response to injury. Also required for avascular cartilage development. Functionally, anti-angiogenic and anti-tumor peptide that inhibits endothelial cell migration, collagen-induced endothelial tube morphogenesis and blood vessel growth in the chorioallantoic membrane. Blocks endothelial cell adhesion to fibronectin and type I collagen. Anti-tumor agent in neovascularization. Interaction with its ligand, integrin alpha2/beta1, is required for the anti-angiogenic properties. Evokes a reduction in phosphorylation of receptor tyrosine kinases via alpha2/beta1 integrin-mediated activation of the tyrosine phosphatase, PTPN6. Its function is as follows. Has anti-angiogenic properties that require binding of calcium ions for full activity. This is Basement membrane-specific heparan sulfate proteoglycan core protein (Hspg2) from Mus musculus (Mouse).